Reading from the N-terminus, the 308-residue chain is Probable dimethyladenosine transferase (308 aa).

The span at 1 to 11 (MGKTSKVKKTK) shows a compositional bias: basic residues. A disordered region spans residues 1-24 (MGKTSKVKKTKAGSSTGNVQSLPF). Over residues 12-24 (AGSSTGNVQSLPF) the composition is skewed to polar residues. Residues His-31, Leu-33, Gly-58, Glu-79, Asp-107, and Asn-122 each coordinate S-adenosyl-L-methionine.

This sequence belongs to the class I-like SAM-binding methyltransferase superfamily. rRNA adenine N(6)-methyltransferase family. Part of the small subunit (SSU) processome, composed of more than 70 proteins and the RNA chaperone small nucleolar RNA (snoRNA) U3.

It localises to the nucleus. The protein resides in the nucleolus. It carries out the reaction adenosine(1779)/adenosine(1780) in 18S rRNA + 4 S-adenosyl-L-methionine = N(6)-dimethyladenosine(1779)/N(6)-dimethyladenosine(1780) in 18S rRNA + 4 S-adenosyl-L-homocysteine + 4 H(+). Functionally, specifically dimethylates two adjacent adenosines in the loop of a conserved hairpin near the 3'-end of 18S rRNA in the 40S particle. Involved in the pre-rRNA processing steps leading to small-subunit rRNA production independently of its RNA-modifying catalytic activity. Part of the small subunit (SSU) processome, first precursor of the small eukaryotic ribosomal subunit. During the assembly of the SSU processome in the nucleolus, many ribosome biogenesis factors, an RNA chaperone and ribosomal proteins associate with the nascent pre-rRNA and work in concert to generate RNA folding, modifications, rearrangements and cleavage as well as targeted degradation of pre-ribosomal RNA by the RNA exosome. The polypeptide is Probable dimethyladenosine transferase (Caenorhabditis elegans).